Consider the following 153-residue polypeptide: Interleukin-4 (153 aa).

The N-terminal stretch at 1–24 is a signal peptide; the sequence is MGLTSQLLPPLFFLLACAGNFAHG. Disulfide bonds link Cys-27/Cys-151, Cys-48/Cys-89, and Cys-70/Cys-123. Asn-62 carries an N-linked (GlcNAc...) asparagine glycan. Asn-129 carries an N-linked (GlcNAc...) asparagine glycan.

It belongs to the IL-4/IL-13 family.

The protein localises to the secreted. Its function is as follows. Participates in at least several B-cell activation processes as well as of other cell types. It is a costimulator of DNA-synthesis. It induces the expression of class II MHC molecules on resting B-cells. It enhances both secretion and cell surface expression of IgE and IgG1. It also regulates the expression of the low affinity Fc receptor for IgE (CD23) on both lymphocytes and monocytes. Positively regulates IL31RA expression in macrophages. Stimulates autophagy in dendritic cells by interfering with mTORC1 signaling and through the induction of RUFY4. The protein is Interleukin-4 (IL4) of Macaca mulatta (Rhesus macaque).